The chain runs to 606 residues: Lysosomal cobalamin transporter ABCD4 (606 aa).

An ABC transmembrane type-1 domain is found at 39–332 (NALMFLTLLC…CFTQLIDLST (294 aa)). A run of 5 helical transmembrane segments spans residues 43–63 (FLTLLCLTLLEQFVIYQVGLI), 76–96 (LEGFKTLTFLAVMLIVLNSTL), 190–210 (IFGYFILGTVVNKTLMGPIVM), 279–299 (YLGSILSYVVIAIPIFSGVYG), and 314–334 (AFVCIYLISCFTQLIDLSTTL). Residues 389 to 603 (LERVSISAPS…GGGRWELMRI (215 aa)) form the ABC transporter domain. An ATP-binding site is contributed by 421–428 (GNTGTGKT).

The protein belongs to the ABC transporter superfamily. ABCD family. Peroxisomal fatty acyl CoA transporter (TC 3.A.1.203) subfamily. Homodimer or heterodimer. Interacts with LMBRD1; this interaction induces the translocation of ABCD4 from the ER to the lysosome membrane. Interacts with LMBRD1 and MMACHC; this interaction ensures the transport of cobalamin from the lysosome to the cytosol. In terms of tissue distribution, ubiquitous.

It localises to the endoplasmic reticulum membrane. Its subcellular location is the lysosome membrane. It carries out the reaction an R-cob(III)alamin(out) + ATP + H2O = an R-cob(III)alamin(in) + ADP + phosphate + H(+). In terms of biological role, lysosomal membrane protein that transports cobalamin (Vitamin B12) from the lysosomal lumen to the cytosol in an ATP-dependent manner. Targeted by LMBRD1 lysosomal chaperone from the endoplasmic reticulum to the lysosomal membrane. Then forms a complex with lysosomal chaperone LMBRD1 and cytosolic MMACHC to transport cobalamin across the lysosomal membrane. In Homo sapiens (Human), this protein is Lysosomal cobalamin transporter ABCD4.